The sequence spans 194 residues: Histone H1.0 (194 aa).

The residue at position 1 (Met1) is an N-acetylmethionine. Residues 1 to 11 show a composition bias toward low complexity; that stretch reads MTENSTSTPAA. The disordered stretch occupies residues 1–29; the sequence is MTENSTSTPAAKPKRAKASKKSTDHPKYS. Residue Thr2 is modified to N-acetylthreonine; in Histone H1.0, N-terminally processed. The 74-residue stretch at 24 to 97 folds into the H15 domain; it reads DHPKYSDMIV…GASGSFRLAK (74 aa). Arg42 carries the post-translational modification Citrulline. The segment at 83–194 is disordered; it reads QTKGVGASGS…SSAKRTGKKK (112 aa). Residue Ser104 is modified to ADP-ribosylserine. Positions 105–194 are enriched in basic residues; that stretch reads VAFKKTKKEV…SSAKRTGKKK (90 aa).

Belongs to the histone H1/H5 family. In terms of processing, ADP-ribosylated on Ser-104 in response to DNA damage.

Its subcellular location is the nucleus. The protein localises to the chromosome. In terms of biological role, histones H1 are necessary for the condensation of nucleosome chains into higher-order structures. The histones H1.0 are found in cells that are in terminal stages of differentiation or that have low rates of cell division. This Bos taurus (Bovine) protein is Histone H1.0 (H1-0).